We begin with the raw amino-acid sequence, 282 residues long: Putative lactoylglutathione lyase (282 aa).

The residue at position 2 (A2) is an N-acetylalanine. VOC domains are found at residues 17–141 (RFLH…LIQR) and 147–274 (PLCQ…LVDN). H20 contributes to the Zn(2+) binding site. R24 serves as a coordination point for substrate. A Zn(2+)-binding site is contributed by E71. Substrate contacts are provided by N75 and H89. Zn(2+)-binding residues include H89 and E137. Catalysis depends on E137, which acts as the Proton donor/acceptor. Substrate is bound at residue 254-255 (LG).

It belongs to the glyoxalase I family. It depends on Zn(2+) as a cofactor.

The enzyme catalyses (R)-S-lactoylglutathione = methylglyoxal + glutathione. It participates in secondary metabolite metabolism; methylglyoxal degradation; (R)-lactate from methylglyoxal: step 1/2. Its function is as follows. Catalyzes the conversion of hemimercaptal, formed from methylglyoxal and glutathione, to S-lactoylglutathione. The protein is Putative lactoylglutathione lyase of Brassica oleracea var. gemmifera (Brussel sprouts).